Consider the following 355-residue polypeptide: Cyclic nucleotide-gated potassium channel mll3241 (355 aa).

Over 1-12 (MSVLPFLRIYAP) the chain is Cytoplasmic. Residues 13–30 (LNAVLAAPGLLAVAALTI) form a helical membrane-spanning segment. The Periplasmic segment spans residues 31–38 (PDMSGRSR). A helical transmembrane segment spans residues 39–61 (LALAALLAVIWGAYLLQLAATLL). Over 62 to 74 (KRRAGVVRDRTPK) the chain is Cytoplasmic. A helical transmembrane segment spans residues 75–94 (IAIDVLAVLVPLAAFLLDGS). Residues 95–112 (PDWSLYCAVWLLKPLRDS) form a helical membrane-spanning segment. At 113 to 129 (TFFPVLGRVLANEARNL) the chain is on the cytoplasmic side. Residues 130–150 (IGVTTLFGVVLFAVALAAYVI) form a helical membrane-spanning segment. Over 151-161 (ERDIQPEKFGS) the chain is Periplasmic. Residues 162–180 (IPQAMWWAVVTLSTTGYGD) constitute an intramembrane region (pore-forming). The short motif at 175-180 (TTGYGD) is the Selectivity filter element. Residues 181–185 (TIPQS) lie on the Periplasmic side of the membrane. A helical membrane pass occupies residues 186 to 210 (FAGRVLAGAVMMSGIGIFGLWAGIL). Topologically, residues 211 to 355 (ATGFYQEVRR…LERRGAAASA (145 aa)) are cytoplasmic. Residues 297-298 (GE), 307-308 (RS), and arginine 348 contribute to the 3',5'-cyclic AMP site.

It belongs to the potassium channel family. Homotetramer.

It is found in the cell membrane. Functionally, cyclic nucleotide-regulated potassium channel activated by cAMP. The sequence is that of Cyclic nucleotide-gated potassium channel mll3241 from Mesorhizobium japonicum (strain LMG 29417 / CECT 9101 / MAFF 303099) (Mesorhizobium loti (strain MAFF 303099)).